Reading from the N-terminus, the 33-residue chain is Toxin Bcg III 25.52 (33 aa).

A disulfide bridge links Cys6 with Cys28.

The protein resides in the secreted. It localises to the nematocyst. The protein is Toxin Bcg III 25.52 of Bunodosoma cangicum (Sea anemone).